We begin with the raw amino-acid sequence, 186 residues long: Probable peptidoglycan L,D-endopeptidase MepK (186 aa).

Positions 1-30 (MNYVDQNKRKWLSLGGIALGISILPNSVLA) are cleaved as a signal peptide. Residues His134, Asp141, and His174 each coordinate Zn(2+).

It belongs to the peptidase M15 family. Zn(2+) is required as a cofactor.

The protein operates within cell wall biogenesis; cell wall polysaccharide biosynthesis. Functionally, l,D-endopeptidase that cleaves meso-diaminopimelic acid (mDAP)-mDAP cross-links in peptidoglycan. It works in conjunction with other elongation-specific D,D-endopeptidases to make space for efficient incorporation of nascent peptidoglycan strands into the sacculus and thus enable cell wall expansion. This chain is Probable peptidoglycan L,D-endopeptidase MepK, found in Haemophilus influenzae (strain ATCC 51907 / DSM 11121 / KW20 / Rd).